Reading from the N-terminus, the 291-residue chain is Formamidopyrimidine-DNA glycosylase (291 aa).

Pro-2 acts as the Schiff-base intermediate with DNA in catalysis. The active-site Proton donor is the Glu-3. The active-site Proton donor; for beta-elimination activity is the Lys-58. DNA contacts are provided by His-100, Arg-123, and Lys-166. Residues 257-291 form an FPG-type zinc finger; that stretch reads SVYGREGKECSRCGMHIVRIVQSGRSSFYCPQCQK. Arg-281 functions as the Proton donor; for delta-elimination activity in the catalytic mechanism.

It belongs to the FPG family. In terms of assembly, monomer. The cofactor is Zn(2+).

It catalyses the reaction Hydrolysis of DNA containing ring-opened 7-methylguanine residues, releasing 2,6-diamino-4-hydroxy-5-(N-methyl)formamidopyrimidine.. It carries out the reaction 2'-deoxyribonucleotide-(2'-deoxyribose 5'-phosphate)-2'-deoxyribonucleotide-DNA = a 3'-end 2'-deoxyribonucleotide-(2,3-dehydro-2,3-deoxyribose 5'-phosphate)-DNA + a 5'-end 5'-phospho-2'-deoxyribonucleoside-DNA + H(+). Involved in base excision repair of DNA damaged by oxidation or by mutagenic agents. Acts as a DNA glycosylase that recognizes and removes damaged bases. Has a preference for oxidized purines, such as 7,8-dihydro-8-oxoguanine (8-oxoG). Has AP (apurinic/apyrimidinic) lyase activity and introduces nicks in the DNA strand. Cleaves the DNA backbone by beta-delta elimination to generate a single-strand break at the site of the removed base with both 3'- and 5'-phosphates. In Bartonella bacilliformis (strain ATCC 35685 / KC583 / Herrer 020/F12,63), this protein is Formamidopyrimidine-DNA glycosylase.